Here is a 270-residue protein sequence, read N- to C-terminus: NAD(P)H-hydrate epimerase (270 aa).

Residues 25-234 (FQQLMDLMQN…DLLAPEAIYQ (210 aa)) form the YjeF N-terminal domain. 73 to 77 (DNGGQ) lines the (6S)-NADPHX pocket. 2 residues coordinate K(+): Asn74 and Asp144. (6S)-NADPHX contacts are provided by residues 148-154 (GVGLYGH) and Glu177. Thr180 contributes to the K(+) binding site.

The protein belongs to the NnrE/AIBP family. The cofactor is K(+).

The enzyme catalyses (6R)-NADHX = (6S)-NADHX. The catalysed reaction is (6R)-NADPHX = (6S)-NADPHX. Catalyzes the epimerization of the S- and R-forms of NAD(P)HX, a damaged form of NAD(P)H that is a result of enzymatic or heat-dependent hydration. This is a prerequisite for the S-specific NAD(P)H-hydrate dehydratase to allow the repair of both epimers of NAD(P)HX. This Legionella pneumophila (strain Corby) protein is NAD(P)H-hydrate epimerase.